The primary structure comprises 459 residues: Cysteine--tRNA ligase (459 aa).

C27 provides a ligand contact to Zn(2+). The short motif at 29 to 39 is the 'HIGH' region element; sequence VTVYDDCHIGH. 3 residues coordinate Zn(2+): C208, H233, and E237. A 'KMSKS' region motif is present at residues 265–269; it reads KMSKS. Residue K268 participates in ATP binding.

This sequence belongs to the class-I aminoacyl-tRNA synthetase family. In terms of assembly, monomer. Requires Zn(2+) as cofactor.

It localises to the cytoplasm. It carries out the reaction tRNA(Cys) + L-cysteine + ATP = L-cysteinyl-tRNA(Cys) + AMP + diphosphate. This chain is Cysteine--tRNA ligase, found in Francisella tularensis subsp. mediasiatica (strain FSC147).